Consider the following 119-residue polypeptide: uncharacterized protein (119 aa).

Residues 55 to 119 (LSTEPPTPPS…SRLPPRSWTN (65 aa)) form a disordered region. Residues 81 to 92 (LSYTRCHSTTYT) are compositionally biased toward polar residues.

This is an uncharacterized protein from Saccharomyces cerevisiae (strain ATCC 204508 / S288c) (Baker's yeast).